The following is a 283-amino-acid chain: Pantothenate synthetase (283 aa).

34–41 (MGALHEGH) contributes to the ATP binding site. His-41 functions as the Proton donor in the catalytic mechanism. Gln-65 contributes to the (R)-pantoate binding site. A beta-alanine-binding site is contributed by Gln-65. ATP is bound at residue 152-155 (GQKD). Gln-158 contributes to the (R)-pantoate binding site. Residues Val-181 and 189–192 (MSSR) each bind ATP.

This sequence belongs to the pantothenate synthetase family. As to quaternary structure, homodimer.

It is found in the cytoplasm. It catalyses the reaction (R)-pantoate + beta-alanine + ATP = (R)-pantothenate + AMP + diphosphate + H(+). The protein operates within cofactor biosynthesis; (R)-pantothenate biosynthesis; (R)-pantothenate from (R)-pantoate and beta-alanine: step 1/1. Functionally, catalyzes the condensation of pantoate with beta-alanine in an ATP-dependent reaction via a pantoyl-adenylate intermediate. This Nitrobacter winogradskyi (strain ATCC 25391 / DSM 10237 / CIP 104748 / NCIMB 11846 / Nb-255) protein is Pantothenate synthetase.